Reading from the N-terminus, the 273-residue chain is Formamidopyrimidine-DNA glycosylase (273 aa).

Pro2 functions as the Schiff-base intermediate with DNA in the catalytic mechanism. Catalysis depends on Glu3, which acts as the Proton donor. Lys58 acts as the Proton donor; for beta-elimination activity in catalysis. The DNA site is built by His92, Arg111, and Arg153. Residues 238–272 form an FPG-type zinc finger; that stretch reads RVYGREGQKCFNCSSTILKTKNSGRSTFYCKTCQY. Arg262 serves as the catalytic Proton donor; for delta-elimination activity.

The protein belongs to the FPG family. Monomer. Requires Zn(2+) as cofactor.

It carries out the reaction Hydrolysis of DNA containing ring-opened 7-methylguanine residues, releasing 2,6-diamino-4-hydroxy-5-(N-methyl)formamidopyrimidine.. It catalyses the reaction 2'-deoxyribonucleotide-(2'-deoxyribose 5'-phosphate)-2'-deoxyribonucleotide-DNA = a 3'-end 2'-deoxyribonucleotide-(2,3-dehydro-2,3-deoxyribose 5'-phosphate)-DNA + a 5'-end 5'-phospho-2'-deoxyribonucleoside-DNA + H(+). In terms of biological role, involved in base excision repair of DNA damaged by oxidation or by mutagenic agents. Acts as a DNA glycosylase that recognizes and removes damaged bases. Has a preference for oxidized purines, such as 7,8-dihydro-8-oxoguanine (8-oxoG). Has AP (apurinic/apyrimidinic) lyase activity and introduces nicks in the DNA strand. Cleaves the DNA backbone by beta-delta elimination to generate a single-strand break at the site of the removed base with both 3'- and 5'-phosphates. The sequence is that of Formamidopyrimidine-DNA glycosylase from Rickettsia canadensis (strain McKiel).